The primary structure comprises 392 residues: MTLLGTALRPAATRVMLLGAGELGKEVAIECQRLGIEVIAVDRYPDAPAMHVAHRSHVINMLDSEALRHVITEEKPHYIVPEIEAIATDTLRELEGEGLNVVPCARATQLTMNREGIRRLAAEELGLPTSTYRFADSEASFHDAVAAVGFPCIVKPVMSSSGKGQSFIRSAEQLAQAWEYAQQGGRAGAGRVIVEGVVKFDFEITLLTVSAVDGVHFCAPVGHRQQDGDYRESWQPQQMSELALKRAQEIARHVVLALGGHGLFGVELFVCGDEVIFSEVSPRPHDTGMVTLISQDLSEFALHVRAFLGMPVGAIRQYGPAASAVILPQLTSQNVTFDNVHAAVGAGVQVRLFGKPEIDGTRRLGVALATGENVEEAVIRAKKAASRVTVKG.

Residues 22–23 (EL) and Glu-82 contribute to the N(1)-(5-phospho-beta-D-ribosyl)glycinamide site. ATP-binding positions include Arg-114, Lys-155, 160-165 (SSGKGQ), 195-198 (EGVV), and Glu-203. In terms of domain architecture, ATP-grasp spans 119–308 (RLAAEELGLP…EFALHVRAFL (190 aa)). Mg(2+) contacts are provided by Glu-267 and Glu-279. N(1)-(5-phospho-beta-D-ribosyl)glycinamide contacts are provided by residues Asp-286, Lys-355, and 362-363 (RR).

It belongs to the PurK/PurT family. In terms of assembly, homodimer.

It carries out the reaction N(1)-(5-phospho-beta-D-ribosyl)glycinamide + formate + ATP = N(2)-formyl-N(1)-(5-phospho-beta-D-ribosyl)glycinamide + ADP + phosphate + H(+). It participates in purine metabolism; IMP biosynthesis via de novo pathway; N(2)-formyl-N(1)-(5-phospho-D-ribosyl)glycinamide from N(1)-(5-phospho-D-ribosyl)glycinamide (formate route): step 1/1. In terms of biological role, involved in the de novo purine biosynthesis. Catalyzes the transfer of formate to 5-phospho-ribosyl-glycinamide (GAR), producing 5-phospho-ribosyl-N-formylglycinamide (FGAR). Formate is provided by PurU via hydrolysis of 10-formyl-tetrahydrofolate. In Salmonella schwarzengrund (strain CVM19633), this protein is Formate-dependent phosphoribosylglycinamide formyltransferase.